We begin with the raw amino-acid sequence, 131 residues long: Acyl carrier protein 3, mitochondrial (131 aa).

A mitochondrion-targeting transit peptide spans Met-1 to Thr-39. The region spanning Asp-49–Thr-124 is the Carrier domain. The residue at position 84 (Ser-84) is an O-(pantetheine 4'-phosphoryl)serine.

It belongs to the acyl carrier protein (ACP) family. In terms of assembly, complex I is composed of at least 49 different subunits. 4'-phosphopantetheine is transferred from CoA to a specific serine of the apo-ACP-like protein.

Its subcellular location is the mitochondrion. It participates in lipid metabolism; fatty acid biosynthesis. In terms of biological role, carrier of the growing fatty acid chain in fatty acid biosynthesis. May be involved in the synthesis of short and medium chain fatty acids. Accessory and non-catalytic subunit of the mitochondrial membrane respiratory chain NADH dehydrogenase (Complex I), which functions in the transfer of electrons from NADH to the respiratory chain. This Arabidopsis thaliana (Mouse-ear cress) protein is Acyl carrier protein 3, mitochondrial (MTACP2).